Here is a 195-residue protein sequence, read N- to C-terminus: MQRNTYNKVGLYILSLAMLFVFIIILTAKIPFCFTSDCSFIGLKKLVLTNIVPIVCFVFFLFSIYFYNRLKNITKYNGQDSVKITSCQSESYESLTFLATYIVPFMGFSFEDMQKNIAYLLLVVVIGIIFIKTDKYYANPTLALFGFKLYRVNILHPGSGETKNLIAISNDVLKVDDNVYYSFFDEFVFIARKKI.

Transmembrane regions (helical) follow at residues 10–30 (GLYILSLAMLFVFIIILTAKI), 46–66 (LVLTNIVPIVCFVFFLFSIYF), and 117–137 (IAYLLLVVVIGIIFIKTDKYY).

The protein localises to the cell inner membrane. In terms of biological role, component of antiviral defense system Kiwa, composed of KwaA and KwaB. Expression of Kiwa in E.coli (strain MG1655) confers resistance to phages lambda and SECphi18. The polypeptide is Kiwa protein KwaA (Escherichia coli O55:H7 (strain RM12579 / EPEC)).